Consider the following 412-residue polypeptide: Polyferredoxin protein MvhB (412 aa).

4Fe-4S ferredoxin-type domains lie at 1–29 (MIVVNKEDCIRCGACQGTCPTAAIEVTPE), 30–57 (DVIYCDICGGEPKCVDACPTGALKIEDL), 67–96 (GRIVFNPDKCNECGDCVEVCPPQILKLDEG), 97–127 (KVKKIPLQGFCVMCQKCVDICPVGVIGVEGI), 138–166 (EGPIFIADCVGCGMCVPECPVDAITLEKV), 168–197 (GVIEIDEDTCIKCGVCAQTCPWNAVYISGK), 207–236 (RKFELDEEACIGCNTCVEACPGDFIVPKSS), 238–266 (LTVELPAICTACGLCEQLCPVDAIDLDVE), 276–305 (EGLVWDEGKCDFIGACANICPNDAIRVVTR), 314–345 (EKVDEEPSFAMCTRCGACTMACPKGALSLVDM), 357–386 (KRVQYNPALCDQCGDCIEACPYDMLKLTDE), and 385–412 (DEKVPLKGFCILCDQCIPACPKGALSLK). Positions 9, 12, 15, and 19 each coordinate [4Fe-4S] cluster. [4Fe-4S] cluster-binding residues include cysteine 76, cysteine 79, cysteine 82, cysteine 86, cysteine 107, cysteine 110, cysteine 113, cysteine 117, cysteine 146, cysteine 149, cysteine 152, cysteine 156, cysteine 177, cysteine 180, cysteine 183, cysteine 187, cysteine 216, cysteine 219, cysteine 222, cysteine 226, cysteine 246, cysteine 249, cysteine 252, and cysteine 256. Residues cysteine 325, cysteine 328, cysteine 331, cysteine 335, cysteine 366, cysteine 369, cysteine 372, cysteine 376, cysteine 394, cysteine 397, cysteine 400, and cysteine 404 each coordinate [4Fe-4S] cluster.

[4Fe-4S] cluster is required as a cofactor.

The protein is Polyferredoxin protein MvhB (mvhB) of Methanothermobacter marburgensis (strain ATCC BAA-927 / DSM 2133 / JCM 14651 / NBRC 100331 / OCM 82 / Marburg) (Methanobacterium thermoautotrophicum).